The primary structure comprises 155 residues: FUN14 domain-containing protein 1 (155 aa).

Over 1–47 the chain is Cytoplasmic; the sequence is MATRNPPPQDYESDDDSYEVLDLTEYARRHQWWNRVFGHSSGPMVEK. A Phosphoserine; by CK2 modification is found at Ser13. Ser17 is subject to Phosphoserine; by ULK1. Phosphotyrosine; by SRC is present on Tyr18. Positions 18-21 match the YXXL motif; the sequence is YEVL. Residues 48–68 traverse the membrane as a helical segment; sequence YSVATQIVMGGVTGWCAGFLF. Topologically, residues 69–74 are mitochondrial intermembrane; sequence QKVGKL. A helical membrane pass occupies residues 75–95; the sequence is AATAVGGGFLLLQIASHSGYV. At 96 to 133 the chain is on the cytoplasmic side; the sequence is QIDWKRVEKDVNKAKRQIKKRANKAAPEINNLIEEATE. Lys119 is covalently cross-linked (Glycyl lysine isopeptide (Lys-Gly) (interchain with G-Cter in ubiquitin)). A helical membrane pass occupies residues 134–154; the sequence is FIKQNIVISSGFVGGFLLGLA. Ser155 is a topological domain (mitochondrial intermembrane).

The protein belongs to the FUN14 family. In terms of assembly, interacts (via YXXL motif) with MAP1 LC3 family proteins MAP1LC3A, MAP1LC3B and GABARAP. Interacts with DNM1L/DPR1. Interacts with GPX4. In terms of processing, phosphorylation at Ser-13 by CK2 and at Tyr-18 by SRC inhibits activation of mitophagy. Following hypoxia, dephosphorylated at Tyr-18, leading to interaction with MAP1 LC3 family proteins and triggering mitophagy. Dephosphorylation is mediated by PGAM5. Phosphorylated by ULK1 at Ser-17 which enhances FUNDC1 binding to LC3. Post-translationally, ubiquitinated on Lys-119. Deubiquitinated by USP19; leading to hypoxia-induced DRP1 oligomerization and GTPase activity. As to expression, widely expressed.

Its subcellular location is the mitochondrion outer membrane. Integral mitochondrial outer-membrane protein that mediates the formation of mitochondria-associated endoplasmic reticulum membranes (MAMs). In turn, mediates angiogenesis and neoangiogenesis through interference with intracellular Ca(2+) communication and regulation of the vascular endothelial growth factor receptor KDR/VEGFR2 expression at both mRNA and protein levels. Also acts as an activator of hypoxia-induced mitophagy, an important mechanism for mitochondrial quality and homeostasis, by interacting with and recruiting LC3 protein family to mitochondria. Mechanistically, recruits DRP1 at ER-mitochondria contact sites leading to DRP1 oligomerization and GTPase activity to facilitate mitochondrial fission during hypoxia. Additionally, plays a role in hepatic ferroptosis by interacting directly with glutathione peroxidase/GPX4 to facilitate its recruitment into mitochondria through TOM/TIM complex where it is degraded by mitophagy. This is FUN14 domain-containing protein 1 (FUNDC1) from Homo sapiens (Human).